We begin with the raw amino-acid sequence, 309 residues long: CDK-activating kinase assembly factor MAT1 (309 aa).

An N-acetylmethionine modification is found at Met1. An RING-type zinc finger spans residues 6-50 (CPRCKTTKYRNPSLKLMVNVCGHTLCESCVDLLFVRGAGNCPECG). Phosphothreonine is present on Thr51. A UIM domain is found at 142–161 (REQEELEEALEVERQEHEQR). Ser279 bears the Phosphoserine mark.

As to quaternary structure, associates primarily with CDK7 and cyclin H to form the CAK complex. CAK can further associate with the core-TFIIH to form the TFIIH basal transcription factor.

It is found in the nucleus. Functionally, stabilizes the cyclin H-CDK7 complex to form a functional CDK-activating kinase (CAK) enzymatic complex. CAK activates the cyclin-associated kinases CDK1, CDK2, CDK4 and CDK6 by threonine phosphorylation. CAK complexed to the core-TFIIH basal transcription factor activates RNA polymerase II by serine phosphorylation of the repetitive C-terminal domain (CTD) of its large subunit (POLR2A), allowing its escape from the promoter and elongation of the transcripts. Involved in cell cycle control and in RNA transcription by RNA polymerase II. The protein is CDK-activating kinase assembly factor MAT1 (Mnat1) of Mus musculus (Mouse).